A 100-amino-acid polypeptide reads, in one-letter code: Small ubiquitin-related modifier 1 (100 aa).

The segment covering 1-12 (MSANQEEDKKPG) has biased composition (basic and acidic residues). A disordered region spans residues 1-21 (MSANQEEDKKPGDGGAHINLK). Residues 16–93 (AHINLKVKGQ…IDAMLHQTGG (78 aa)) enclose the Ubiquitin-like domain. Glycine 93 is covalently cross-linked (Glycyl lysine isopeptide (Gly-Lys) (interchain with K-? in acceptor proteins)).

It belongs to the ubiquitin family. SUMO subfamily. Interacts with SAE2, SCE1, SIZ1 and MMS21. Interacts with HSFA2. Covalently attached to ABI5, FLD, GTE3, HSFA2 and ICE1.

It is found in the nucleus. Its subcellular location is the cytoplasm. Ubiquitin-like protein which can be covalently attached to target lysines as a monomer. Does not seem to be involved in protein degradation and may function as an antagonist of ubiquitin in the degradation process. Required for the massive protein sumoylation in the nucleus induced by heat shock and controlled by SIZ1. Involved in the regulation of the heat stress transcription factor HSFA2 in acquired thermotolerance. The protein is Small ubiquitin-related modifier 1 of Arabidopsis thaliana (Mouse-ear cress).